We begin with the raw amino-acid sequence, 345 residues long: Anthranilate phosphoribosyltransferase (345 aa).

Residues Gly-86, 89–90 (GD), Thr-94, 96–99 (NIST), 114–122 (KHGNRNLSS), and Ala-126 each bind 5-phospho-alpha-D-ribose 1-diphosphate. Gly-86 provides a ligand contact to anthranilate. Ser-98 contributes to the Mg(2+) binding site. Position 117 (Asn-117) interacts with anthranilate. Arg-172 contacts anthranilate. Positions 231 and 232 each coordinate Mg(2+).

Belongs to the anthranilate phosphoribosyltransferase family. Homodimer. It depends on Mg(2+) as a cofactor.

It carries out the reaction N-(5-phospho-beta-D-ribosyl)anthranilate + diphosphate = 5-phospho-alpha-D-ribose 1-diphosphate + anthranilate. It participates in amino-acid biosynthesis; L-tryptophan biosynthesis; L-tryptophan from chorismate: step 2/5. Catalyzes the transfer of the phosphoribosyl group of 5-phosphorylribose-1-pyrophosphate (PRPP) to anthranilate to yield N-(5'-phosphoribosyl)-anthranilate (PRA). The polypeptide is Anthranilate phosphoribosyltransferase (Jannaschia sp. (strain CCS1)).